Reading from the N-terminus, the 346-residue chain is Biotin synthase (346 aa).

The 230-residue stretch at 36–265 folds into the Radical SAM core domain; it reads YFGRQVMLHR…KAEIRIGGGR (230 aa). 3 residues coordinate [4Fe-4S] cluster: Cys54, Cys58, and Cys61. [2Fe-2S] cluster-binding residues include Cys98, Cys130, Cys190, and Arg260.

The protein belongs to the radical SAM superfamily. Biotin synthase family. As to quaternary structure, homodimer. Requires [4Fe-4S] cluster as cofactor. [2Fe-2S] cluster serves as cofactor.

It carries out the reaction (4R,5S)-dethiobiotin + (sulfur carrier)-SH + 2 reduced [2Fe-2S]-[ferredoxin] + 2 S-adenosyl-L-methionine = (sulfur carrier)-H + biotin + 2 5'-deoxyadenosine + 2 L-methionine + 2 oxidized [2Fe-2S]-[ferredoxin]. It participates in cofactor biosynthesis; biotin biosynthesis; biotin from 7,8-diaminononanoate: step 2/2. Its function is as follows. Catalyzes the conversion of dethiobiotin (DTB) to biotin by the insertion of a sulfur atom into dethiobiotin via a radical-based mechanism. This is Biotin synthase from Acaryochloris marina (strain MBIC 11017).